We begin with the raw amino-acid sequence, 154 residues long: Endoribonuclease YbeY (154 aa).

3 residues coordinate Zn(2+): histidine 114, histidine 118, and histidine 124.

This sequence belongs to the endoribonuclease YbeY family. Zn(2+) serves as cofactor.

It localises to the cytoplasm. Its function is as follows. Single strand-specific metallo-endoribonuclease involved in late-stage 70S ribosome quality control and in maturation of the 3' terminus of the 16S rRNA. In Haemophilus influenzae (strain PittEE), this protein is Endoribonuclease YbeY.